The chain runs to 103 residues: NADH dehydrogenase [ubiquinone] 1 beta subcomplex subunit 7 (103 aa).

The CHCH domain maps to 27–69 (RDMCAHLLIPLNKCRQAEFYLPWKCEDERHVYEKCEYELVMER). 2 short sequence motifs (cx9C motif) span residues 30–40 (CAHLLIPLNKC) and 51–61 (CEDERHVYEKC). Disulfide bonds link Cys-30/Cys-61 and Cys-40/Cys-51.

This sequence belongs to the complex I NDUFB7 subunit family. Complex I is composed of at least 49 different subunits.

The protein resides in the mitochondrion. It localises to the mitochondrion inner membrane. The protein localises to the mitochondrion intermembrane space. Accessory subunit of the mitochondrial membrane respiratory chain NADH dehydrogenase (Complex I), that is believed not to be involved in catalysis. Complex I functions in the transfer of electrons from NADH to the respiratory chain. The immediate electron acceptor for the enzyme is believed to be ubiquinone. The polypeptide is NADH dehydrogenase [ubiquinone] 1 beta subcomplex subunit 7 (Arabidopsis thaliana (Mouse-ear cress)).